The sequence spans 902 residues: MKKLLPLCCWHSWLLLFYCDFQVRGAHTRSHVHPGFEVLASASHYWPLENVDGIHELQETTGASRTHNLTVLPSHNSTFVYTNDSAYSNFSATVDIVEGKVNKGIYLKEGKGVTFLYYRKNKTSCISNPAQCGPEGVSFSFFWKTQGEQSTSIPSAYGGQVISNGFKVCSRGGKGSVELYTHNKSVTWEASFSPPGHYWTHVLFTWKSEEGLKVYVNGTLRTSDPSGKASPAYGESNDNLVLDLTKSYENRAFDEFIIWERALTPDEIAMYFTAAIGEQLSLSSTPPSFSVTPTVNTMAPTNAYHPIITNLTEERKNFRRPGVVLSYLQNMSLSLPNKSLSEETAFNLTKTFLNTVGEVLRLPSWTAVSEDSAVVPGLIDTIDTVMSHITYNLQASKPQVAIVGSSSMADFSVAKVLPKTMNSSHYRFPARGQNYIEIPHEAFHSQAWTTIVGLLYHSVHYYLSNIQPASTKIAEAANYKNCLLSATSYLISLEVSPTPKLSQNLSGSPLITVHLRHHLTQRQYTEATNESNRIFLYCAFLDFSSGEGIWSNQGCALTEGNLSYSICRCTHLTNFAILMQVVPLELTRGHQVALSSISYIGCSLSVLCLAITLVTFAVLSSVSTIRNQRYHIHANLSCAVLVAQVLLLISFRFEPGTAPCQVLAMLLHYFFLSAFAWMLVEGLHLYSMVIKVFGSEDSKHRYYYGIGWGFPLLICIISIVFAMDSYGTSKNCWLSLGNGAIWAFVAPALFIIVVNIGILIAVTRVISQISAENYKIHGDPSAFKLTAKAVAVLLPILGTSWVFGVLAVNNQAMVFQYMFAILNSLQGFFIFLFHCLLNSEVRAAFKHKTKVWSLTSSSSRQANVKPFSSDIMNGTRPATGSTRLSPWDKSSHSGHRVDLSAV.

An N-terminal signal peptide occupies residues 1–25 (MKKLLPLCCWHSWLLLFYCDFQVRG). Residues 26-598 (AHTRSHVHPG…GHQVALSSIS (573 aa)) are Extracellular-facing. N-linked (GlcNAc...) asparagine glycans are attached at residues Asn-68, Asn-76, Asn-83, Asn-89, Asn-121, Asn-183, Asn-217, Asn-310, Asn-330, Asn-337, Asn-347, Asn-422, Asn-504, Asn-529, and Asn-561. Residues 111–304 (KGVTFLYYRK…VNTMAPTNAY (194 aa)) form the Pentraxin (PTX) domain. One can recognise a GAIN-B domain in the interval 399–585 (QVAIVGSSSM…AILMQVVPLE (187 aa)). Disulfide bonds link Cys-538–Cys-567 and Cys-555–Cys-569. The tract at residues 538-585 (CAFLDFSSGEGIWSNQGCALTEGNLSYSICRCTHLTNFAILMQVVPLE) is GPS. Residues 574 to 582 (NFAILMQVV) form a stachel region. Residue Gln-591 participates in 17beta-hydroxy-5alpha-androstan-3-one binding. The helical transmembrane segment at 599–619 (YIGCSLSVLCLAITLVTFAVL) threads the bilayer. Topologically, residues 620–630 (SSVSTIRNQRY) are cytoplasmic. Residues 631-651 (HIHANLSCAVLVAQVLLLISF) form a helical membrane-spanning segment. Topologically, residues 652-661 (RFEPGTAPCQ) are extracellular. A disulfide bridge connects residues Cys-660 and Cys-732. A helical transmembrane segment spans residues 662-682 (VLAMLLHYFFLSAFAWMLVEG). Residues 683 to 702 (LHLYSMVIKVFGSEDSKHRY) are Cytoplasmic-facing. Residues 703–723 (YYGIGWGFPLLICIISIVFAM) form a helical membrane-spanning segment. Residues 724–739 (DSYGTSKNCWLSLGNG) lie on the Extracellular side of the membrane. Residues 740–760 (AIWAFVAPALFIIVVNIGILI) traverse the membrane as a helical segment. Residues 761-788 (AVTRVISQISAENYKIHGDPSAFKLTAK) are Cytoplasmic-facing. The chain crosses the membrane as a helical span at residues 789-809 (AVAVLLPILGTSWVFGVLAVN). Residues 810 to 812 (NQA) lie on the Extracellular side of the membrane. Residues 813–833 (MVFQYMFAILNSLQGFFIFLF) traverse the membrane as a helical segment. Topologically, residues 834 to 902 (HCLLNSEVRA…SGHRVDLSAV (69 aa)) are cytoplasmic. The tract at residues 865 to 902 (KPFSSDIMNGTRPATGSTRLSPWDKSSHSGHRVDLSAV) is disordered. Positions 870-884 (DIMNGTRPATGSTRL) are enriched in polar residues. Basic and acidic residues predominate over residues 889 to 902 (KSSHSGHRVDLSAV).

It belongs to the G-protein coupled receptor 2 family. Adhesion G-protein coupled receptor (ADGR) subfamily. Heterodimer of 2 chains generated by proteolytic processing; the large extracellular N-terminal fragment and the membrane-bound C-terminal fragment predominantly remain associated and non-covalently linked. Interacts with ESYT1; interaction takes place in absence of cytosolic calcium and inhibits the G protein-coupled receptor activity of ADGRD1. In terms of processing, autoproteolytically processed at the GPS region of the GAIN-B domain; this cleavage modulates receptor activity. Cleavage takes place early in the secretory pathway before N-glycosylation.

It localises to the cell membrane. Its activity is regulated as follows. Forms a heterodimer of 2 chains generated by proteolytic processing that remain associated through non-covalent interactions mediated by the GAIN-B domain. In the inactivated receptor, the Stachel sequence (also named stalk) is embedded in the GAIN-B domain, where it adopts a beta-strand conformation. On activation, the Stachel moves into the 7 transmembrane region and adopts a twisted hook-shaped configuration that forms contacts within the receptor, leading to coupling of a G-alpha protein, which activates signaling. The cleaved GAIN-B and N-terminal domains can then dissociate from the rest of the receptor. Interaction with ESYT1 in absence of cytosolic calcium inhibits the G protein-coupled receptor activity; interaction and inhibition is relieved when cytosolic calcium increases. Functionally, adhesion G-protein coupled receptor (aGPCR) for androgen hormone 5alpha-dihydrotestosterone (5alpha-DHT), also named 17beta-hydroxy-5alpha-androstan-3-one, the most potent hormone among androgens. Also activated by methenolone drug. Ligand binding causes a conformation change that triggers signaling via guanine nucleotide-binding proteins (G proteins) and modulates the activity of downstream effectors, such as adenylate cyclase. ADGRD1 is coupled to G(s) G proteins and mediates activation of adenylate cyclase activity. Acts as a 5alpha-DHT receptor in muscle cells, thereby increasing intracellular cyclic AMP (cAMP) levels and enhancing muscle strength. The polypeptide is Adhesion G-protein coupled receptor D1 (ADGRD1) (Bos taurus (Bovine)).